A 901-amino-acid chain; its full sequence is Protein translocase subunit SecA (901 aa).

ATP contacts are provided by residues Gln-87, 105 to 109 (GEGKT), and Asp-512. Positions 885, 887, 896, and 897 each coordinate Zn(2+).

This sequence belongs to the SecA family. Monomer and homodimer. Part of the essential Sec protein translocation apparatus which comprises SecA, SecYEG and auxiliary proteins SecDF-YajC and YidC. The cofactor is Zn(2+).

The protein resides in the cell inner membrane. Its subcellular location is the cytoplasm. It catalyses the reaction ATP + H2O + cellular proteinSide 1 = ADP + phosphate + cellular proteinSide 2.. Functionally, part of the Sec protein translocase complex. Interacts with the SecYEG preprotein conducting channel. Has a central role in coupling the hydrolysis of ATP to the transfer of proteins into and across the cell membrane, serving both as a receptor for the preprotein-SecB complex and as an ATP-driven molecular motor driving the stepwise translocation of polypeptide chains across the membrane. The protein is Protein translocase subunit SecA of Salmonella paratyphi A (strain ATCC 9150 / SARB42).